A 305-amino-acid polypeptide reads, in one-letter code: MLKQRTIKQIVKTVGIGLHSGRKVELTLRPAGPDTGIVFSRVDLATPVDIPASAMAIGDTRLASVLQKDGARVSTIEHLMSACAGLGIDNLYVDVTAEEIPIMDGSAGSFVFLIQSAGIEEQNAAKKFIKVTKPVEIRDGDKFARLDPYFGFKLKFTIDFRHPAVDKTGQALEVDFANTSYVREIARARTFGFAHEVEMMRELGLARGGSMDNAIVLDEYRILNNDGLRYDDEFVKHKMLDAIGDLYVVGHPLLASYTAYKSGHGLNNALLRELLAHEDSYEIVTFDDTQKAPRGFAYETQTAFA.

Residues His-78, His-237, and Asp-241 each contribute to the Zn(2+) site. His-264 (proton donor) is an active-site residue.

It belongs to the LpxC family. Zn(2+) serves as cofactor.

The catalysed reaction is a UDP-3-O-[(3R)-3-hydroxyacyl]-N-acetyl-alpha-D-glucosamine + H2O = a UDP-3-O-[(3R)-3-hydroxyacyl]-alpha-D-glucosamine + acetate. Its pathway is glycolipid biosynthesis; lipid IV(A) biosynthesis; lipid IV(A) from (3R)-3-hydroxytetradecanoyl-[acyl-carrier-protein] and UDP-N-acetyl-alpha-D-glucosamine: step 2/6. In terms of biological role, catalyzes the hydrolysis of UDP-3-O-myristoyl-N-acetylglucosamine to form UDP-3-O-myristoylglucosamine and acetate, the committed step in lipid A biosynthesis. This is UDP-3-O-acyl-N-acetylglucosamine deacetylase from Paraburkholderia xenovorans (strain LB400).